The chain runs to 316 residues: Bifunctional peptidase and (3S)-lysyl hydroxylase JMJD7 (316 aa).

Cysteine sulfenic acid (-SOH) is present on Cys-19. Residues Tyr-123 and Thr-172 each coordinate 2-oxoglutarate. Succinate is bound at residue Tyr-123. The JmjC domain occupies 124–310; it reads IQKQNSNLSV…YCYYRMLEQM (187 aa). The Fe cation site is built by His-175 and Asp-177. Residues Asn-181, Tyr-183, and Lys-190 each coordinate 2-oxoglutarate. Succinate contacts are provided by Tyr-183 and Lys-190. Fe cation is bound at residue His-278. Trp-292 provides a ligand contact to 2-oxoglutarate.

As to quaternary structure, homodimer; disulfide-linked. It depends on Fe(2+) as a cofactor. As to expression, expressed in the pars intercerebralis and fan-shaped body, regions known to be involved in sleep.

It is found in the nucleus. Its subcellular location is the cytoplasm. It carries out the reaction L-lysyl-[protein] + 2-oxoglutarate + O2 = (3S)-3-hydroxy-L-lysyl-[protein] + succinate + CO2. In terms of biological role, bifunctional enzyme that acts both as an endopeptidase and 2-oxoglutarate-dependent monooxygenase. Endopeptidase that cleaves histones N-terminal tails at the carboxyl side of methylated arginine or lysine residues, to generate 'tailless nucleosomes', which may trigger transcription elongation. Hydroxylates the guanylate binding protein 128up. May be involved in regulation of behavior and circadian rhythms. In Drosophila melanogaster (Fruit fly), this protein is Bifunctional peptidase and (3S)-lysyl hydroxylase JMJD7.